A 206-amino-acid polypeptide reads, in one-letter code: dITP/XTP pyrophosphatase (206 aa).

Residue 7 to 12 (TSNKDK) coordinates substrate. Asp-74 acts as the Proton acceptor in catalysis. Asp-74 lines the Mg(2+) pocket. Residues Ser-75, 159-162 (FGYD), Lys-182, and 187-188 (HR) contribute to the substrate site.

This sequence belongs to the HAM1 NTPase family. As to quaternary structure, homodimer. Mg(2+) is required as a cofactor.

The catalysed reaction is XTP + H2O = XMP + diphosphate + H(+). It catalyses the reaction dITP + H2O = dIMP + diphosphate + H(+). It carries out the reaction ITP + H2O = IMP + diphosphate + H(+). In terms of biological role, pyrophosphatase that catalyzes the hydrolysis of nucleoside triphosphates to their monophosphate derivatives, with a high preference for the non-canonical purine nucleotides XTP (xanthosine triphosphate), dITP (deoxyinosine triphosphate) and ITP. Seems to function as a house-cleaning enzyme that removes non-canonical purine nucleotides from the nucleotide pool, thus preventing their incorporation into DNA/RNA and avoiding chromosomal lesions. The protein is dITP/XTP pyrophosphatase of Campylobacter hominis (strain ATCC BAA-381 / DSM 21671 / CCUG 45161 / LMG 19568 / NCTC 13146 / CH001A).